A 105-amino-acid chain; its full sequence is MAKVHVRRTDKVVVISGKDKGKVSEVLAVYPKTSKVLVKDANVVTKHVKPNRENMQGGIVKKEAPMNSSKVMLYCTNCNSATRISKKLLEDGTKVRVCKKCGEIL.

The protein belongs to the universal ribosomal protein uL24 family. In terms of assembly, part of the 50S ribosomal subunit.

One of two assembly initiator proteins, it binds directly to the 5'-end of the 23S rRNA, where it nucleates assembly of the 50S subunit. Functionally, one of the proteins that surrounds the polypeptide exit tunnel on the outside of the subunit. The sequence is that of Large ribosomal subunit protein uL24 from Clostridium novyi (strain NT).